The following is a 391-amino-acid chain: Elongation factor Tu (391 aa).

Positions 10–201 constitute a tr-type G domain; that stretch reads KPHVNIGTIG…AVDEYIPTPA (192 aa). The tract at residues 19 to 26 is G1; the sequence is GHVDHGKT. Residue 19–26 coordinates GTP; sequence GHVDHGKT. Residue Thr-26 participates in Mg(2+) binding. The tract at residues 55–59 is G2; it reads GITIS. Residues 76 to 79 are G3; it reads DCPG. GTP-binding positions include 76 to 80 and 131 to 134; these read DCPGH and NKVD. The interval 131–134 is G4; it reads NKVD. The tract at residues 169–171 is G5; the sequence is SAL.

Belongs to the TRAFAC class translation factor GTPase superfamily. Classic translation factor GTPase family. EF-Tu/EF-1A subfamily. As to quaternary structure, monomer.

It localises to the cytoplasm. It catalyses the reaction GTP + H2O = GDP + phosphate + H(+). In terms of biological role, GTP hydrolase that promotes the GTP-dependent binding of aminoacyl-tRNA to the A-site of ribosomes during protein biosynthesis. The chain is Elongation factor Tu from Jannaschia sp. (strain CCS1).